Consider the following 457-residue polypeptide: Argininosuccinate lyase (457 aa).

Belongs to the lyase 1 family. Argininosuccinate lyase subfamily.

Its subcellular location is the cytoplasm. The catalysed reaction is 2-(N(omega)-L-arginino)succinate = fumarate + L-arginine. Its pathway is amino-acid biosynthesis; L-arginine biosynthesis; L-arginine from L-ornithine and carbamoyl phosphate: step 3/3. The sequence is that of Argininosuccinate lyase from Escherichia coli O127:H6 (strain E2348/69 / EPEC).